The sequence spans 181 residues: GMP synthase [glutamine-hydrolyzing] subunit A (181 aa).

The 180-residue stretch at 2 to 181 (KILVVNNYGQ…FDNFLEICRR (180 aa)) folds into the Glutamine amidotransferase type-1 domain. Cysteine 72 functions as the Nucleophile in the catalytic mechanism. Catalysis depends on residues histidine 159 and glutamate 161.

As to quaternary structure, heterodimer composed of a glutamine amidotransferase subunit (A) and a GMP-binding subunit (B).

It carries out the reaction XMP + L-glutamine + ATP + H2O = GMP + L-glutamate + AMP + diphosphate + 2 H(+). It participates in purine metabolism; GMP biosynthesis; GMP from XMP (L-Gln route): step 1/1. Its function is as follows. Catalyzes the synthesis of GMP from XMP. The protein is GMP synthase [glutamine-hydrolyzing] subunit A of Methanothrix thermoacetophila (strain DSM 6194 / JCM 14653 / NBRC 101360 / PT) (Methanosaeta thermophila).